The chain runs to 502 residues: Glycerol kinase (502 aa).

ADP is bound at residue threonine 14. ATP-binding residues include threonine 14, threonine 15, and serine 16. Threonine 14 contacts sn-glycerol 3-phosphate. An ADP-binding site is contributed by arginine 18. Residues arginine 84, glutamate 85, tyrosine 136, and aspartate 246 each coordinate sn-glycerol 3-phosphate. Arginine 84, glutamate 85, tyrosine 136, aspartate 246, and glutamine 247 together coordinate glycerol. Residues threonine 268 and glycine 311 each coordinate ADP. Threonine 268, glycine 311, glutamine 315, and glycine 412 together coordinate ATP. Residues glycine 412 and asparagine 416 each contribute to the ADP site.

This sequence belongs to the FGGY kinase family. Homotetramer and homodimer (in equilibrium). Heterodimer with EIIA-Glc. Binds 1 zinc ion per glycerol kinase EIIA-Glc dimer. The zinc ion is important for dimerization.

The catalysed reaction is glycerol + ATP = sn-glycerol 3-phosphate + ADP + H(+). Its pathway is polyol metabolism; glycerol degradation via glycerol kinase pathway; sn-glycerol 3-phosphate from glycerol: step 1/1. Its activity is regulated as follows. Activity of this regulatory enzyme is affected by several metabolites. Allosterically and non-competitively inhibited by fructose 1,6-bisphosphate (FBP) and unphosphorylated phosphocarrier protein EIIA-Glc (III-Glc), an integral component of the bacterial phosphotransferase (PTS) system. Key enzyme in the regulation of glycerol uptake and metabolism. Catalyzes the phosphorylation of glycerol to yield sn-glycerol 3-phosphate. In Salmonella agona (strain SL483), this protein is Glycerol kinase.